Reading from the N-terminus, the 431-residue chain is Adenylosuccinate lyase (431 aa).

Residues 4–5, 67–69, and 93–94 contribute to the N(6)-(1,2-dicarboxyethyl)-AMP site; these read RY, RHD, and TS. Catalysis depends on His141, which acts as the Proton donor/acceptor. N(6)-(1,2-dicarboxyethyl)-AMP is bound at residue Gln212. The active-site Proton donor/acceptor is Ser262. Residues Ser263, 268-270, Asn276, and 307-311 each bind N(6)-(1,2-dicarboxyethyl)-AMP; these read KRN and SAERI.

This sequence belongs to the lyase 1 family. Adenylosuccinate lyase subfamily. Homodimer and homotetramer. Residues from neighboring subunits contribute catalytic and substrate-binding residues to each active site.

It catalyses the reaction N(6)-(1,2-dicarboxyethyl)-AMP = fumarate + AMP. It carries out the reaction (2S)-2-[5-amino-1-(5-phospho-beta-D-ribosyl)imidazole-4-carboxamido]succinate = 5-amino-1-(5-phospho-beta-D-ribosyl)imidazole-4-carboxamide + fumarate. Its pathway is purine metabolism; AMP biosynthesis via de novo pathway; AMP from IMP: step 2/2. It participates in purine metabolism; IMP biosynthesis via de novo pathway; 5-amino-1-(5-phospho-D-ribosyl)imidazole-4-carboxamide from 5-amino-1-(5-phospho-D-ribosyl)imidazole-4-carboxylate: step 2/2. In terms of biological role, catalyzes two reactions in de novo purine nucleotide biosynthesis. Catalyzes the breakdown of 5-aminoimidazole- (N-succinylocarboxamide) ribotide (SAICAR or 2-[5-amino-1-(5-phospho-beta-D-ribosyl)imidazole-4-carboxamido]succinate) to 5-aminoimidazole-4-carboxamide ribotide (AICAR or 5-amino-1-(5-phospho-beta-D-ribosyl)imidazole-4-carboxamide) and fumarate, and of adenylosuccinate (ADS or N(6)-(1,2-dicarboxyethyl)-AMP) to adenosine monophosphate (AMP) and fumarate. This chain is Adenylosuccinate lyase (purB), found in Staphylococcus haemolyticus (strain JCSC1435).